A 397-amino-acid polypeptide reads, in one-letter code: Purine nucleoside transport protein NupG (397 aa).

Helical transmembrane passes span 1–21, 32–52, 62–82, 97–117, 133–153, 165–185, 187–207, 242–262, 282–302, 335–355, and 377–397; these read MYFL…FLCS, IITL…TKVG, FFTW…PSVM, IIFI…PWLI, LESF…LAVI, LLTF…GSYL, MVPA…ALII, MLVG…YVAL, IFAY…HDAM, VAVA…GMIY, and LLVS…LFVW.

This sequence belongs to the concentrative nucleoside transporter (CNT) (TC 2.A.41) family.

It localises to the cell membrane. In terms of biological role, involved in the uptake of the purine ribonucleosides inosine and guanosine. This Bacillus subtilis (strain 168) protein is Purine nucleoside transport protein NupG (nupG).